The sequence spans 78 residues: Large ribosomal subunit protein uL30 (78 aa).

Acidic residues predominate over residues Asp58–Ala68. Residues Asp58–Ser78 are disordered. Over residues Asp69–Ser78 the composition is skewed to basic and acidic residues.

The protein belongs to the universal ribosomal protein uL30 family. In terms of assembly, part of the 50S ribosomal subunit.

The sequence is that of Large ribosomal subunit protein uL30 from Roseiflexus sp. (strain RS-1).